The sequence spans 225 residues: MVQSCSAYGCKNRYDKDKPISFHKFPLKRPLLCKKWEAAVRRAEFKPTKYSSICSDHFSADCFKRECNNKLLKDNAVPTIFAHMEIKKKSGKAVKKEQLPAEPEPVPAVPEIDPAIGLLLPPLYTPSHIAVICDHNYTVEDTVHQRRRIQQLEEQVDKLRKKLKIANQKCRRQERSLEKLEREVSEYREAKGSGYVIFPGNYYEVLNENEYKELTPEITYKEIIL.

The segment at 5–57 (CSAYGCKNRYDKDKPISFHKFPLKRPLLCKKWEAAVRRAEFKPTKYSSICSDH) adopts a THAP-type zinc-finger fold. Positions 139-194 (VEDTVHQRRRIQQLEEQVDKLRKKLKIANQKCRRQERSLEKLEREVSEYREAKGSG) form a coiled coil.

Belongs to the THAP1 family.

It localises to the nucleus. It is found in the nucleoplasm. Its function is as follows. DNA-binding transcription regulator that regulates endothelial cell proliferation and G1/S cell-cycle progression. Specifically binds the 5'-[AT]NTNN[GT]GGCA[AGT]-3' core DNA sequence and acts by modulating expression of pRB-E2F cell-cycle target genes. The sequence is that of THAP domain-containing protein 1 A (thap1-a) from Xenopus laevis (African clawed frog).